The primary structure comprises 431 residues: UDP-N-acetylglucosamine 1-carboxyvinyltransferase (431 aa).

22–23 contributes to the phosphoenolpyruvate binding site; sequence KN. Residue arginine 102 coordinates UDP-N-acetyl-alpha-D-glucosamine. Cysteine 126 acts as the Proton donor in catalysis. At cysteine 126 the chain carries 2-(S-cysteinyl)pyruvic acid O-phosphothioketal. UDP-N-acetyl-alpha-D-glucosamine is bound by residues 131 to 135, aspartate 316, and isoleucine 338; that span reads RPVDL.

It belongs to the EPSP synthase family. MurA subfamily.

It is found in the cytoplasm. It catalyses the reaction phosphoenolpyruvate + UDP-N-acetyl-alpha-D-glucosamine = UDP-N-acetyl-3-O-(1-carboxyvinyl)-alpha-D-glucosamine + phosphate. It participates in cell wall biogenesis; peptidoglycan biosynthesis. Its function is as follows. Cell wall formation. Adds enolpyruvyl to UDP-N-acetylglucosamine. The protein is UDP-N-acetylglucosamine 1-carboxyvinyltransferase of Beijerinckia indica subsp. indica (strain ATCC 9039 / DSM 1715 / NCIMB 8712).